Consider the following 219-residue polypeptide: Non-specific lipid transfer protein GPI-anchored 25 (219 aa).

The signal sequence occupies residues 1 to 22 (MATKITGVFILILTITFSSSSA). Cystine bridges form between Cys39-Cys85, Cys49-Cys68, Cys69-Cys110, and Cys83-Cys123. The N-linked (GlcNAc...) asparagine glycan is linked to Asn59. N-linked (GlcNAc...) asparagine glycosylation occurs at Asn148. A disordered region spans residues 152–181 (SPQSVDLAPEVSPSSDLFSPETATLAPPPP). Ser192 carries the GPI-anchor amidated serine lipid modification. A propeptide spans 193–219 (SDSLKIRNFWFPSTIIMTFATSILARI) (removed in mature form).

This sequence belongs to the plant LTP family.

It localises to the cell membrane. Its function is as follows. Probable lipid transfer protein. The chain is Non-specific lipid transfer protein GPI-anchored 25 from Arabidopsis thaliana (Mouse-ear cress).